The primary structure comprises 321 residues: Bifunctional methyltransferase/endonuclease (321 aa).

Residues 1 to 86 form a probable methylated-DNA--protein-cysteine methyltransferase region; the sequence is MLSVDYENFD…PLGSAEKMRR (86 aa). Residue Cys61 is part of the active site. The interval 87 to 318 is endonuclease V; the sequence is LIRDGITITN…YDFSTRNTAI (232 aa). Mg(2+)-binding residues include Asp145 and Asp204.

This sequence in the N-terminal section; belongs to the MGMT family. It in the C-terminal section; belongs to the endonuclease V family. The cofactor is Mg(2+).

It localises to the cytoplasm. It carries out the reaction Endonucleolytic cleavage at apurinic or apyrimidinic sites to products with a 5'-phosphate.. Functionally, DNA repair enzyme involved in the repair of deaminated bases. Selectively cleaves double-stranded DNA at the second phosphodiester bond 3' to a deoxyinosine leaving behind the intact lesion on the nicked DNA. In Thermoplasma volcanium (strain ATCC 51530 / DSM 4299 / JCM 9571 / NBRC 15438 / GSS1), this protein is Bifunctional methyltransferase/endonuclease.